An 826-amino-acid chain; its full sequence is Zinc phosphodiesterase ELAC protein 2 (826 aa).

A mitochondrion-targeting transit peptide spans 1–16 (MWALCSLLRSATGRTM). Residues 15–27 (TMSQGRTISQGSA) are compositionally biased toward polar residues. Disordered stretches follow at residues 15-53 (TMSQGRTISQGSARRQRPPKDPLRHLRTREKRGPSGSSG) and 187-231 (SEQR…VSQR). 6 positions are modified to phosphoserine: S199, S208, S212, S229, S618, and S736. Positions 208 to 224 (SPERSSDSESNESEPHL) are enriched in basic and acidic residues. A disordered region spans residues 798–826 (ALTDDLEDGEPQQKRAHTEEPQSKKVRAQ). Residues 808–820 (PQQKRAHTEEPQS) are compositionally biased toward basic and acidic residues.

This sequence belongs to the RNase Z family. As to quaternary structure, homodimer. Interacts with PTCD1. Zn(2+) is required as a cofactor.

Its subcellular location is the mitochondrion. It is found in the mitochondrion matrix. The protein localises to the mitochondrion nucleoid. The protein resides in the nucleus. It carries out the reaction Endonucleolytic cleavage of RNA, removing extra 3' nucleotides from tRNA precursor, generating 3' termini of tRNAs. A 3'-hydroxy group is left at the tRNA terminus and a 5'-phosphoryl group is left at the trailer molecule.. Its function is as follows. Zinc phosphodiesterase, which displays mitochondrial tRNA 3'-processing endonuclease activity. Involved in tRNA maturation, by removing a 3'-trailer from precursor tRNA. Associates with mitochondrial DNA complexes at the nucleoids to initiate RNA processing and ribosome assembly. This Macaca fascicularis (Crab-eating macaque) protein is Zinc phosphodiesterase ELAC protein 2 (ELAC2).